A 303-amino-acid polypeptide reads, in one-letter code: Eukaryotic translation initiation factor 3 subunit G (303 aa).

Disordered regions lie at residues 1–32 (MAAV…QTIV), 81–100 (GLSA…VGEN), 105–126 (PSAN…NAMK), and 181–215 (GAAG…AGGK). Over residues 109–126 (WRKDQKDESKDANANAMK) the composition is skewed to basic and acidic residues. One can recognise an RRM domain in the interval 223–301 (ATLRVTNVSE…LILRVEFAKK (79 aa)).

This sequence belongs to the eIF-3 subunit G family. Component of the eukaryotic translation initiation factor 3 (eIF-3) complex.

The protein localises to the cytoplasm. RNA-binding component of the eukaryotic translation initiation factor 3 (eIF-3) complex, which is involved in protein synthesis of a specialized repertoire of mRNAs and, together with other initiation factors, stimulates binding of mRNA and methionyl-tRNAi to the 40S ribosome. The eIF-3 complex specifically targets and initiates translation of a subset of mRNAs involved in cell proliferation. This subunit can bind 18S rRNA. This is Eukaryotic translation initiation factor 3 subunit G from Pyricularia oryzae (strain 70-15 / ATCC MYA-4617 / FGSC 8958) (Rice blast fungus).